Here is a 583-residue protein sequence, read N- to C-terminus: uncharacterized protein (583 aa).

Ser22 carries the post-translational modification Phosphoserine. 6 helical membrane passes run 91-111 (MIAI…SSLA), 116-136 (ASVI…VYAL), 159-179 (PAWG…TFPL), 194-214 (INSC…NLFG), 223-243 (FILS…AIII), and 311-331 (VFWR…LLVS). N-linked (GlcNAc...) asparagine glycosylation is present at Asn340. Transmembrane regions (helical) follow at residues 364–384 (VFNA…TFTA), 410–430 (PLLA…NAAG), 435–455 (TVFD…WGSI), 476–496 (LGFV…FNIL), and 518–538 (FFQG…YKIY).

It belongs to the amino acid-polyamine-organocation (APC) superfamily.

The protein resides in the golgi apparatus membrane. Its subcellular location is the membrane. This is an uncharacterized protein from Schizosaccharomyces pombe (strain 972 / ATCC 24843) (Fission yeast).